The primary structure comprises 432 residues: Adenylosuccinate synthetase (432 aa).

GTP-binding positions include 13–19 and 41–43; these read GDEGKGK and GHT. The Proton acceptor role is filled by Asp-14. Positions 14 and 41 each coordinate Mg(2+). Residues 14–17, 39–42, Thr-131, Arg-145, Gln-226, Thr-241, and Arg-305 each bind IMP; these read DEGK and NAGH. Catalysis depends on His-42, which acts as the Proton donor. 301–307 provides a ligand contact to substrate; the sequence is SVTGRAR. Residues Arg-307, 333 to 335, and 416 to 418 contribute to the GTP site; these read KLD and STG.

Belongs to the adenylosuccinate synthetase family. Homodimer. Mg(2+) is required as a cofactor.

The protein resides in the cytoplasm. The enzyme catalyses IMP + L-aspartate + GTP = N(6)-(1,2-dicarboxyethyl)-AMP + GDP + phosphate + 2 H(+). It functions in the pathway purine metabolism; AMP biosynthesis via de novo pathway; AMP from IMP: step 1/2. Its function is as follows. Plays an important role in the de novo pathway of purine nucleotide biosynthesis. Catalyzes the first committed step in the biosynthesis of AMP from IMP. This chain is Adenylosuccinate synthetase, found in Neisseria meningitidis serogroup C (strain 053442).